The chain runs to 527 residues: UDP-glucuronosyltransferase 2A1 (527 aa).

A signal peptide spans M1–G20. Over G21 to D490 the chain is Extracellular. N49 carries an N-linked (GlcNAc...) asparagine glycan. K134 carries the N6-succinyllysine modification. N313 carries an N-linked (GlcNAc...) asparagine glycan. The helical transmembrane segment at V491 to I507 threads the bilayer. Residues K508–D527 are Cytoplasmic-facing.

The protein belongs to the UDP-glycosyltransferase family. Olfactory epithelium. Mainly found in the sustentacular cells and to a lesser extent in Bowman's gland cells. Also expressed in the olfactory sensory neuron nuclei. Neuronal localization within the olfactory bulb is mainly found in the deeper granular cells.

Its subcellular location is the membrane. The catalysed reaction is glucuronate acceptor + UDP-alpha-D-glucuronate = acceptor beta-D-glucuronoside + UDP + H(+). The enzyme catalyses 16beta,17beta-estriol + UDP-alpha-D-glucuronate = 16beta,17beta-estriol 16-O-(beta-D-glucuronate) + UDP + H(+). It carries out the reaction 16alpha,17alpha-estriol + UDP-alpha-D-glucuronate = 16alpha,17alpha-estriol 16-O-(beta-D-glucuronate) + UDP + H(+). It catalyses the reaction 17alpha-estradiol + UDP-alpha-D-glucuronate = 17alpha-estradiol 17-O-(beta-D-glucuronate) + UDP + H(+). The catalysed reaction is 17alpha-estradiol + UDP-alpha-D-glucuronate = 17alpha-estradiol 3-O-(beta-D-glucuronate) + UDP + H(+). The enzyme catalyses 17beta-estradiol + UDP-alpha-D-glucuronate = 17beta-estradiol 3-O-(beta-D-glucuronate) + UDP + H(+). It carries out the reaction 17beta-estradiol + UDP-alpha-D-glucuronate = 17beta-estradiol 17-O-(beta-D-glucuronate) + UDP + H(+). It catalyses the reaction testosterone + UDP-alpha-D-glucuronate = testosterone 17-O-(beta-D-glucuronate) + UDP + H(+). The catalysed reaction is epitestosterone + UDP-alpha-D-glucuronate = epitestosterone 17-O-(beta-D-glucuronate) + UDP + H(+). The enzyme catalyses lithocholate + UDP-alpha-D-glucuronate = lithocholoyl-3-O-(beta-D-glucuronate) + UDP + H(+). It carries out the reaction lithocholate + UDP-alpha-D-glucuronate = lithocholoyl-24-O-(beta-D-glucuronate) + UDP. It catalyses the reaction deoxycholate + UDP-alpha-D-glucuronate = deoxycholoyl-24-O-(beta-D-glucuronate) + UDP. The catalysed reaction is hyodeoxycholate + UDP-alpha-D-glucuronate = hyodeoxycholate 6-O-(beta-D-glucuronate) + UDP + H(+). The enzyme catalyses hyocholate + UDP-alpha-D-glucuronate = hyocholoyl-24-O-(beta-D-glucuronate) + UDP. UDP-glucuronosyltransferase (UGT) that catalyzes phase II biotransformation reactions in which lipophilic substrates are conjugated with glucuronic acid to increase the metabolite's water solubility, thereby facilitating excretion into either the urine or bile. Essential for the elimination and detoxification of drugs, xenobiotics and endogenous compounds. Catalyzes the glucuronidation of endogenous steroid hormones such as androgens (testosterones) and estrogens (estradiol and estriol). Contributes to bile acid (BA) detoxification by catalyzing the glucuronidation of BA substrates, which are natural detergents for dietary lipids absorption. Shows a high affinity to aliphatic odorants such as citronellol as well as olfactory tissue specificity, and therefore may be involved in olfaction. The chain is UDP-glucuronosyltransferase 2A1 from Rattus norvegicus (Rat).